Here is a 355-residue protein sequence, read N- to C-terminus: Protein MGF 360-10L (355 aa).

An ANK repeat occupies 57-89; it reads DLNTALMLATKENNYQLIKLFTEWGADINYGLI.

This sequence belongs to the asfivirus MGF 360 family.

In terms of biological role, plays a role in virus cell tropism, and may be required for efficient virus replication in macrophages. This chain is Protein MGF 360-10L, found in African swine fever virus (isolate Tick/Malawi/Lil 20-1/1983) (ASFV).